A 409-amino-acid polypeptide reads, in one-letter code: MRGGNRLGAGRKVIPESEKKKRKSVYITDKLYTRIMDTDIENCNNFSQKCMALIELAMENLNKNNQEHSVKRNNILMVRDTKSTYNKTNNNFEKQNRGIKLTFIDLFAGIGGIRLGFEDKYTKCVFSSEWDKYAAQTYEANYGEKPHGDITKINENDIPDQDVLLAGFPCQPFSNIGKREGFAHERRNIIFDVLRILKKKQPKMFLLENVKGLLTNDNGNTFRVILDNLKSLGYSVFYEVMDAQNFGLPQRRERIVIVGFHPDLGINDFSFPKGNPDNKVPINAILEHNPTGYSISKRLQESYLFKKDDGKPQIVDFRCTYQVNTLVASYHKIQRLTGTFVKDGETGLRLFSELELKRLMGFPVDFKVPVSRTQMYRQFGNSVAVPMIKAVAGAMKERLLLAEMQVLKK.

The SAM-dependent MTase C5-type domain occupies 101–402; that stretch reads LTFIDLFAGI…GAMKERLLLA (302 aa). The active site involves Cys170.

This sequence belongs to the class I-like SAM-binding methyltransferase superfamily. C5-methyltransferase family.

It carries out the reaction a 2'-deoxycytidine in DNA + S-adenosyl-L-methionine = a 5-methyl-2'-deoxycytidine in DNA + S-adenosyl-L-homocysteine + H(+). Functionally, a methylase, recognizes the double-stranded sequence 5'-CCGG-3', methylates C-1 on both strands, and protects the DNA from cleavage by the BsuFI endonuclease. This chain is Type II methyltransferase M.BsuFI (hsdFM), found in Bacillus subtilis.